We begin with the raw amino-acid sequence, 247 residues long: Granzyme B (247 aa).

Positions 1–18 are cleaved as a signal peptide; it reads MQPILLLLAFLLLPRADA. Positions 19 to 20 are cleaved as a propeptide — activation peptide; it reads GE. A Peptidase S1 domain is found at 21-245; it reads IIGGHEAKPH…FVHWIKKTMK (225 aa). A disulfide bridge links Cys49 with Cys65. The active-site Charge relay system is the His64. N-linked (GlcNAc...) asparagine glycans are attached at residues Asn71 and Asn104. The active-site Charge relay system is Asp108. Disulfide bonds link Cys142-Cys209 and Cys173-Cys188. Ser203 acts as the Charge relay system in catalysis.

It belongs to the peptidase S1 family. Granzyme subfamily.

It is found in the secreted. Its subcellular location is the cytolytic granule. It catalyses the reaction Preferential cleavage: -Asp-|-Xaa- &gt;&gt; -Asn-|-Xaa- &gt; -Met-|-Xaa-, -Ser-|-Xaa-.. Inactivated by the serine protease inhibitor diisopropylfluorophosphate. In terms of biological role, abundant protease in the cytosolic granules of cytotoxic T-cells and NK-cells which activates caspase-independent pyroptosis when delivered into the target cell through the immunological synapse. It cleaves after Asp. Once delivered into the target cell, acts by catalyzing cleavage of gasdermin-E (GSDME), releasing the pore-forming moiety of GSDME, thereby triggering pyroptosis and target cell death. Seems to be linked to an activation cascade of caspases (aspartate-specific cysteine proteases) responsible for apoptosis execution. Cleaves caspase-3, -9 and -10 (CASP3, CASP9 and CASP10, respectively) to give rise to active enzymes mediating apoptosis. Cleaves and activates CASP7 in response to bacterial infection, promoting plasma membrane repair. In Homo sapiens (Human), this protein is Granzyme B.